Reading from the N-terminus, the 796-residue chain is Potassium transporter 10 (796 aa).

The disordered stretch occupies residues M1–S30. At M1–Q58 the chain is on the cytoplasmic side. The helical transmembrane segment at L59–F79 threads the bilayer. Residues Y80–G95 are Extracellular-facing. Residues A96–V116 traverse the membrane as a helical segment. The Cytoplasmic segment spans residues C117–L184. A helical membrane pass occupies residues L185–I205. Residues S206–N217 lie on the Extracellular side of the membrane. Residues L218–F238 form a helical membrane-spanning segment. The Cytoplasmic portion of the chain corresponds to S239–V248. The helical transmembrane segment at G249–F269 threads the bilayer. Residues N270–R298 lie on the Extracellular side of the membrane. A helical membrane pass occupies residues W299–L319. At S320–H321 the chain is on the cytoplasmic side. Residues F322 to A342 form a helical membrane-spanning segment. Over Y343–R368 the chain is Extracellular. Residues V369 to I389 traverse the membrane as a helical segment. Residues S390–Q420 are Cytoplasmic-facing. The chain crosses the membrane as a helical span at residues I421–F441. Topologically, residues K442–T453 are extracellular. A helical membrane pass occupies residues A454–W474. The Cytoplasmic portion of the chain corresponds to R475–L480. A helical membrane pass occupies residues V481 to F501. The Extracellular segment spans residues K502–Q505. A helical membrane pass occupies residues G506–Y526. Residues G527 to V796 are Cytoplasmic-facing.

This sequence belongs to the HAK/KUP transporter (TC 2.A.72.3) family.

It is found in the cell membrane. Putative potassium transporter. This Arabidopsis thaliana (Mouse-ear cress) protein is Potassium transporter 10 (POT10).